A 474-amino-acid chain; its full sequence is GTPase Der (474 aa).

2 EngA-type G domains span residues Leu3 to Arg167 and Ile204 to Asn379. GTP contacts are provided by residues Gly9 to Ser16, Asp56 to Leu60, Asn119 to Glu122, Gly210 to Ser217, Asp257 to Leu261, and Asn322 to Asp325. Residues Arg380–Asp464 enclose the KH-like domain.

It belongs to the TRAFAC class TrmE-Era-EngA-EngB-Septin-like GTPase superfamily. EngA (Der) GTPase family. Associates with the 50S ribosomal subunit.

GTPase that plays an essential role in the late steps of ribosome biogenesis. This Bartonella tribocorum (strain CIP 105476 / IBS 506) protein is GTPase Der.